A 165-amino-acid chain; its full sequence is Urease accessory protein UreE (165 aa).

The interval E137–H156 is disordered.

The protein belongs to the UreE family.

The protein localises to the cytoplasm. Functionally, involved in urease metallocenter assembly. Binds nickel. Probably functions as a nickel donor during metallocenter assembly. The sequence is that of Urease accessory protein UreE from Pseudomonas putida (strain GB-1).